A 119-amino-acid chain; its full sequence is Large ribosomal subunit protein bL20 (119 aa).

The protein belongs to the bacterial ribosomal protein bL20 family.

Functionally, binds directly to 23S ribosomal RNA and is necessary for the in vitro assembly process of the 50S ribosomal subunit. It is not involved in the protein synthesizing functions of that subunit. The polypeptide is Large ribosomal subunit protein bL20 (Azorhizobium caulinodans (strain ATCC 43989 / DSM 5975 / JCM 20966 / LMG 6465 / NBRC 14845 / NCIMB 13405 / ORS 571)).